The following is a 1055-amino-acid chain: Auxin response factor 16 (1055 aa).

The TF-B3 DNA-binding region spans 127 to 229 (FCKTLTASDT…QLLLGIRRAT (103 aa)). Disordered regions lie at residues 485–510 (PVMS…QQSS), 532–565 (QEHL…EQTS), 585–609 (SQLQ…PIAG), 701–720 (SDSI…LNHM), and 732–769 (SHSA…SRNL). Composition is skewed to low complexity over residues 488 to 510 (SQHQ…QQSS) and 532 to 552 (QEHL…ASSL). Residues 742–756 (PSSSTAPSTSRISPI) are compositionally biased toward low complexity. A compositionally biased stretch (polar residues) spans 757 to 769 (NSLSRANQGSRNL). The PB1 domain occupies 940–1024 (RTFTKVQKRG…KSIKILSAAE (85 aa)). A disordered region spans residues 1034-1055 (LGGVPPQTQACSASDDANAWRG).

This sequence belongs to the ARF family. As to quaternary structure, homodimers and heterodimers. As to expression, expressed in roots, culms, leaves and young panicles.

It is found in the nucleus. Auxin response factors (ARFs) are transcriptional factors that bind specifically to the DNA sequence 5'-TGTCTC-3' found in the auxin-responsive promoter elements (AuxREs). The chain is Auxin response factor 16 (ARF16) from Oryza sativa subsp. japonica (Rice).